Consider the following 75-residue polypeptide: Small ribosomal subunit protein bS18 (75 aa).

This sequence belongs to the bacterial ribosomal protein bS18 family. As to quaternary structure, part of the 30S ribosomal subunit. Forms a tight heterodimer with protein bS6.

Its function is as follows. Binds as a heterodimer with protein bS6 to the central domain of the 16S rRNA, where it helps stabilize the platform of the 30S subunit. The polypeptide is Small ribosomal subunit protein bS18 (Pseudoalteromonas atlantica (strain T6c / ATCC BAA-1087)).